The sequence spans 247 residues: NAD(P)H-quinone oxidoreductase subunit K, chloroplastic (247 aa).

Residues Cys-64, Cys-65, Cys-129, and Cys-160 each coordinate [4Fe-4S] cluster.

This sequence belongs to the complex I 20 kDa subunit family. As to quaternary structure, NDH is composed of at least 16 different subunits, 5 of which are encoded in the nucleus. The cofactor is [4Fe-4S] cluster.

Its subcellular location is the plastid. It is found in the chloroplast thylakoid membrane. It catalyses the reaction a plastoquinone + NADH + (n+1) H(+)(in) = a plastoquinol + NAD(+) + n H(+)(out). The catalysed reaction is a plastoquinone + NADPH + (n+1) H(+)(in) = a plastoquinol + NADP(+) + n H(+)(out). Its function is as follows. NDH shuttles electrons from NAD(P)H:plastoquinone, via FMN and iron-sulfur (Fe-S) centers, to quinones in the photosynthetic chain and possibly in a chloroplast respiratory chain. The immediate electron acceptor for the enzyme in this species is believed to be plastoquinone. Couples the redox reaction to proton translocation, and thus conserves the redox energy in a proton gradient. This Mesostigma viride (Green alga) protein is NAD(P)H-quinone oxidoreductase subunit K, chloroplastic.